The chain runs to 306 residues: UDP-3-O-acyl-N-acetylglucosamine deacetylase (306 aa).

Residues histidine 79, histidine 238, and aspartate 242 each contribute to the Zn(2+) site. The Proton donor role is filled by histidine 265.

It belongs to the LpxC family. Zn(2+) serves as cofactor.

It catalyses the reaction a UDP-3-O-[(3R)-3-hydroxyacyl]-N-acetyl-alpha-D-glucosamine + H2O = a UDP-3-O-[(3R)-3-hydroxyacyl]-alpha-D-glucosamine + acetate. The protein operates within glycolipid biosynthesis; lipid IV(A) biosynthesis; lipid IV(A) from (3R)-3-hydroxytetradecanoyl-[acyl-carrier-protein] and UDP-N-acetyl-alpha-D-glucosamine: step 2/6. In terms of biological role, catalyzes the hydrolysis of UDP-3-O-myristoyl-N-acetylglucosamine to form UDP-3-O-myristoylglucosamine and acetate, the committed step in lipid A biosynthesis. The protein is UDP-3-O-acyl-N-acetylglucosamine deacetylase of Shewanella oneidensis (strain ATCC 700550 / JCM 31522 / CIP 106686 / LMG 19005 / NCIMB 14063 / MR-1).